The primary structure comprises 709 residues: Polyribonucleotide nucleotidyltransferase (709 aa).

Asp-487 and Asp-493 together coordinate Mg(2+). One can recognise a KH domain in the interval 554–613 (PRIHTMKISSDKIKDVIGKGGAVIRALCEETGTTIEIEDDGTIKIAATEGAAAKEAIRRI). Positions 623-691 (GKIYTGKVMR…RQGRIRLSIK (69 aa)) constitute an S1 motif domain.

It belongs to the polyribonucleotide nucleotidyltransferase family. As to quaternary structure, component of the RNA degradosome, which is a multiprotein complex involved in RNA processing and mRNA degradation. The cofactor is Mg(2+).

The protein localises to the cytoplasm. The enzyme catalyses RNA(n+1) + phosphate = RNA(n) + a ribonucleoside 5'-diphosphate. Its function is as follows. Involved in mRNA degradation. Catalyzes the phosphorolysis of single-stranded polyribonucleotides processively in the 3'- to 5'-direction. The sequence is that of Polyribonucleotide nucleotidyltransferase from Aliivibrio fischeri (strain ATCC 700601 / ES114) (Vibrio fischeri).